The sequence spans 447 residues: Glyceraldehyde-3-phosphate dehydrogenase GAPB, chloroplastic (447 aa).

A chloroplast-targeting transit peptide spans 1–80 (MATHAALAVS…STPVRGETVA (80 aa)). NADP(+) contacts are provided by residues 91-92 (RI), Asp115, and Arg160. Residues 234-236 (SCT), Thr265, Arg280, 293-294 (TG), and Arg316 each bind D-glyceraldehyde 3-phosphate. The active-site Nucleophile is Cys235. Asn399 contributes to the NADP(+) binding site.

Belongs to the glyceraldehyde-3-phosphate dehydrogenase family. Tetramer of either four A chains (GAPDH 2) or two A and two B chains (GAPDH 1). As to expression, expressed in leaves and stems.

It is found in the plastid. Its subcellular location is the chloroplast membrane. The protein resides in the chloroplast stroma. The enzyme catalyses D-glyceraldehyde 3-phosphate + phosphate + NADP(+) = (2R)-3-phospho-glyceroyl phosphate + NADPH + H(+). Its pathway is carbohydrate biosynthesis; Calvin cycle. Functionally, involved in the photosynthetic reductive pentose phosphate pathway (Calvin-Benson cycle). Catalyzes the reduction of 1,3-diphosphoglycerate by NADPH. The protein is Glyceraldehyde-3-phosphate dehydrogenase GAPB, chloroplastic (GAPB) of Arabidopsis thaliana (Mouse-ear cress).